Here is a 629-residue protein sequence, read N- to C-terminus: 1-deoxy-D-xylulose-5-phosphate synthase (629 aa).

Thiamine diphosphate is bound by residues histidine 78 and alanine 119–serine 121. Aspartate 150 provides a ligand contact to Mg(2+). Thiamine diphosphate contacts are provided by residues glycine 151–alanine 152, asparagine 179, tyrosine 286, and glutamate 368. Asparagine 179 serves as a coordination point for Mg(2+).

This sequence belongs to the transketolase family. DXPS subfamily. As to quaternary structure, homodimer. It depends on Mg(2+) as a cofactor. The cofactor is thiamine diphosphate.

It catalyses the reaction D-glyceraldehyde 3-phosphate + pyruvate + H(+) = 1-deoxy-D-xylulose 5-phosphate + CO2. It functions in the pathway metabolic intermediate biosynthesis; 1-deoxy-D-xylulose 5-phosphate biosynthesis; 1-deoxy-D-xylulose 5-phosphate from D-glyceraldehyde 3-phosphate and pyruvate: step 1/1. In terms of biological role, catalyzes the acyloin condensation reaction between C atoms 2 and 3 of pyruvate and glyceraldehyde 3-phosphate to yield 1-deoxy-D-xylulose-5-phosphate (DXP). The chain is 1-deoxy-D-xylulose-5-phosphate synthase from Acidovorax ebreus (strain TPSY) (Diaphorobacter sp. (strain TPSY)).